We begin with the raw amino-acid sequence, 318 residues long: Transaldolase (318 aa).

Lysine 132 acts as the Schiff-base intermediate with substrate in catalysis.

It belongs to the transaldolase family. Type 1 subfamily. Homodimer.

The protein resides in the cytoplasm. It catalyses the reaction D-sedoheptulose 7-phosphate + D-glyceraldehyde 3-phosphate = D-erythrose 4-phosphate + beta-D-fructose 6-phosphate. The protein operates within carbohydrate degradation; pentose phosphate pathway; D-glyceraldehyde 3-phosphate and beta-D-fructose 6-phosphate from D-ribose 5-phosphate and D-xylulose 5-phosphate (non-oxidative stage): step 2/3. Transaldolase is important for the balance of metabolites in the pentose-phosphate pathway. The protein is Transaldolase of Shewanella sediminis (strain HAW-EB3).